The primary structure comprises 385 residues: Sesquiterpene alcohol synthase (385 aa).

2 residues coordinate Mg(2+): D123 and D127. The DDXXD motif motif lies at D123–D127.

The protein belongs to the terpene synthase family. Mg(2+) serves as cofactor. As to expression, specifically expressed in tissues lining the cuticle of the abdominal sternites of mature males.

The catalysed reaction is (2E,6E)-farnesyl diphosphate + H2O = (1S,6S,7R)-sesquipiperitol + diphosphate. It functions in the pathway pheromone biosynthesis. Its function is as follows. Sesquiterpene alcohol synthase that catalyzes the formation of (1S,6S,7R)-sesquipiperitol, a terpene intermediate in murgantiol biosynthesis, a male-released aggregation pheromone. The chain is Sesquiterpene alcohol synthase from Murgantia histrionica (Harlequin bug).